Reading from the N-terminus, the 61-residue chain is Photosystem II reaction center protein Z (61 aa).

The next 2 helical transmembrane spans lie at 8–28 (ALLVLVLYSLLLVVAVPVLFS) and 41–61 (LVGSLLWVLMVIGVGVLSFFK).

This sequence belongs to the PsbZ family. In terms of assembly, PSII is composed of 1 copy each of membrane proteins PsbA, PsbB, PsbC, PsbD, PsbE, PsbF, PsbH, PsbI, PsbJ, PsbK, PsbL, PsbM, PsbT, PsbX, PsbY, PsbZ, Psb30/Ycf12, peripheral proteins PsbO, CyanoQ (PsbQ), PsbU, PsbV and a large number of cofactors. It forms dimeric complexes.

Its subcellular location is the cellular thylakoid membrane. May control the interaction of photosystem II (PSII) cores with the light-harvesting antenna, regulates electron flow through the 2 photosystem reaction centers. PSII is a light-driven water plastoquinone oxidoreductase, using light energy to abstract electrons from H(2)O, generating a proton gradient subsequently used for ATP formation. This Synechococcus sp. (strain JA-3-3Ab) (Cyanobacteria bacterium Yellowstone A-Prime) protein is Photosystem II reaction center protein Z.